A 154-amino-acid polypeptide reads, in one-letter code: Ascorbate-specific PTS system EIIA component (154 aa).

The PTS EIIA type-2 domain maps to Ser6–Thr150. His68 serves as the catalytic Tele-phosphohistidine intermediate. Position 68 is a phosphohistidine (His68).

Its subcellular location is the cytoplasm. Its function is as follows. The phosphoenolpyruvate-dependent sugar phosphotransferase system (sugar PTS), a major carbohydrate active transport system, catalyzes the phosphorylation of incoming sugar substrates concomitantly with their translocation across the cell membrane. The enzyme II UlaABC PTS system is involved in ascorbate transport. In Salmonella paratyphi A (strain ATCC 9150 / SARB42), this protein is Ascorbate-specific PTS system EIIA component (ulaC).